A 346-amino-acid polypeptide reads, in one-letter code: tRNA N6-adenosine threonylcarbamoyltransferase (346 aa).

Histidine 110 and histidine 114 together coordinate Fe cation. Substrate is bound by residues 132 to 136, aspartate 165, glycine 178, and asparagine 274; that span reads LLSGG. Residue aspartate 298 participates in Fe cation binding.

Belongs to the KAE1 / TsaD family. It depends on Fe(2+) as a cofactor.

Its subcellular location is the cytoplasm. The catalysed reaction is L-threonylcarbamoyladenylate + adenosine(37) in tRNA = N(6)-L-threonylcarbamoyladenosine(37) in tRNA + AMP + H(+). Its function is as follows. Required for the formation of a threonylcarbamoyl group on adenosine at position 37 (t(6)A37) in tRNAs that read codons beginning with adenine. Is involved in the transfer of the threonylcarbamoyl moiety of threonylcarbamoyl-AMP (TC-AMP) to the N6 group of A37, together with TsaE and TsaB. TsaD likely plays a direct catalytic role in this reaction. In Borreliella burgdorferi (strain ATCC 35210 / DSM 4680 / CIP 102532 / B31) (Borrelia burgdorferi), this protein is tRNA N6-adenosine threonylcarbamoyltransferase.